A 481-amino-acid polypeptide reads, in one-letter code: UDP-glycosyltransferase 72B3 (481 aa).

Residues Ser277, Ala347–Gln349, His364–Glu372, and Tyr386–Gln389 contribute to the UDP-alpha-D-glucose site.

It belongs to the UDP-glycosyltransferase family.

Functionally, possesses low quercetin 3-O-glucosyltransferase activity in vitro. The protein is UDP-glycosyltransferase 72B3 (UGT72B3) of Arabidopsis thaliana (Mouse-ear cress).